The sequence spans 231 residues: 7-cyano-7-deazaguanine synthase (231 aa).

11–21 (LSAGLDSTVNA) provides a ligand contact to ATP. 4 residues coordinate Zn(2+): Cys197, Cys205, Cys208, and Cys211.

Belongs to the QueC family. Zn(2+) is required as a cofactor.

The catalysed reaction is 7-carboxy-7-deazaguanine + NH4(+) + ATP = 7-cyano-7-deazaguanine + ADP + phosphate + H2O + H(+). The protein operates within purine metabolism; 7-cyano-7-deazaguanine biosynthesis. Functionally, catalyzes the ATP-dependent conversion of 7-carboxy-7-deazaguanine (CDG) to 7-cyano-7-deazaguanine (preQ(0)). This chain is 7-cyano-7-deazaguanine synthase, found in Bdellovibrio bacteriovorus (strain ATCC 15356 / DSM 50701 / NCIMB 9529 / HD100).